The following is an 83-amino-acid chain: UPF0512 protein I (83 aa).

Belongs to the UPF0512 family.

The polypeptide is UPF0512 protein I (Dictyostelium discoideum (Social amoeba)).